Reading from the N-terminus, the 468-residue chain is KASVGFKAGVKEYKLTYYTPTYETKDTDILAAFRVTPQPGVPPEEAGAAVAAESSTGTWTTVWTDGLTSLDRYKGRCYHIEPVAGEENQFIAYVAYPLDLFEEGSVTNMFTSIVGNVFGFKALRALRLEDLRIPTAYVKTFQGPPHGIQVERDKLNKYGRPLLGCTIKPKLGLSAKNYGRAVYECLRGGLDFTKDDENVNSQPFMRWRDRFLFCAEAIFKSQSETGEIKGHYLNATAGTCEEMMKRAIFARELGVPIVMHDYLTGGFTANTSLAHYCRDNGLLLHIHRAMHAVIDRQKNHGIHFRVLAKALRMSGGDHIHAGTVVGKLEGERDITLGFVDLLRDDFIEKDRSRGLFFTQDWVSLPGVLPVASGGIHVWHMPALTEIFGDDSVLQFGGGTLGHPWGNAPGAVANRVALEACVQARNEGRDLASEGNEIIREASKWSPELAAACEVWKEIKFEFEAMDTL.

Lysine 7 is modified (N6,N6,N6-trimethyllysine). Substrate contacts are provided by asparagine 116 and threonine 166. Lysine 168 serves as the catalytic Proton acceptor. Lysine 170 serves as a coordination point for substrate. Lysine 194, aspartate 196, and glutamate 197 together coordinate Mg(2+). Lysine 194 bears the N6-carboxylysine mark. The active-site Proton acceptor is histidine 287. Residues arginine 288, histidine 320, and serine 372 each contribute to the substrate site.

This sequence belongs to the RuBisCO large chain family. Type I subfamily. In terms of assembly, heterohexadecamer of 8 large chains and 8 small chains; disulfide-linked. The disulfide link is formed within the large subunit homodimers. Mg(2+) serves as cofactor. The disulfide bond which can form in the large chain dimeric partners within the hexadecamer appears to be associated with oxidative stress and protein turnover.

It localises to the plastid. Its subcellular location is the chloroplast. The enzyme catalyses 2 (2R)-3-phosphoglycerate + 2 H(+) = D-ribulose 1,5-bisphosphate + CO2 + H2O. It carries out the reaction D-ribulose 1,5-bisphosphate + O2 = 2-phosphoglycolate + (2R)-3-phosphoglycerate + 2 H(+). In terms of biological role, ruBisCO catalyzes two reactions: the carboxylation of D-ribulose 1,5-bisphosphate, the primary event in carbon dioxide fixation, as well as the oxidative fragmentation of the pentose substrate in the photorespiration process. Both reactions occur simultaneously and in competition at the same active site. This is Ribulose bisphosphate carboxylase large chain from Cornus alternifolia (Pagoda dogwood).